The primary structure comprises 321 residues: Probable endolytic peptidoglycan transglycosylase RlpA (321 aa).

This sequence belongs to the RlpA family.

Lytic transglycosylase with a strong preference for naked glycan strands that lack stem peptides. In Synechocystis sp. (strain ATCC 27184 / PCC 6803 / Kazusa), this protein is Probable endolytic peptidoglycan transglycosylase RlpA.